The sequence spans 320 residues: GTP 3',8-cyclase (320 aa).

In terms of domain architecture, Radical SAM core spans 4–226 (TFQRSINYMR…PIITDATSPA (223 aa)). R13 is a binding site for GTP. Residues C20 and C24 each contribute to the [4Fe-4S] cluster site. S-adenosyl-L-methionine is bound at residue Y26. C27 contributes to the [4Fe-4S] cluster binding site. R63 lines the GTP pocket. G67 serves as a coordination point for S-adenosyl-L-methionine. Residue T94 participates in GTP binding. S118 contributes to the S-adenosyl-L-methionine binding site. K155 provides a ligand contact to GTP. An S-adenosyl-L-methionine-binding site is contributed by M189. 2 residues coordinate [4Fe-4S] cluster: C249 and C252. 254–256 (RIR) is a binding site for GTP. C266 contacts [4Fe-4S] cluster.

This sequence belongs to the radical SAM superfamily. MoaA family. In terms of assembly, monomer and homodimer. Requires [4Fe-4S] cluster as cofactor.

It catalyses the reaction GTP + AH2 + S-adenosyl-L-methionine = (8S)-3',8-cyclo-7,8-dihydroguanosine 5'-triphosphate + 5'-deoxyadenosine + L-methionine + A + H(+). Its pathway is cofactor biosynthesis; molybdopterin biosynthesis. Functionally, catalyzes the cyclization of GTP to (8S)-3',8-cyclo-7,8-dihydroguanosine 5'-triphosphate. This Alkaliphilus metalliredigens (strain QYMF) protein is GTP 3',8-cyclase.